Consider the following 201-residue polypeptide: ATP synthase subunit b 2 (201 aa).

Positions 1–17 are enriched in polar residues; sequence MAEQKNPLTTPSPNADT. Positions 1–39 are disordered; sequence MAEQKNPLTTPSPNADTTIVPAGSPHTHTEQPSGGHGGA. A helical membrane pass occupies residues 47–66; sequence TFLSQLIWLALAFGLLYYLM.

This sequence belongs to the ATPase B chain family. F-type ATPases have 2 components, F(1) - the catalytic core - and F(0) - the membrane proton channel. F(1) has five subunits: alpha(3), beta(3), gamma(1), delta(1), epsilon(1). F(0) has three main subunits: a(1), b(2) and c(10-14). The alpha and beta chains form an alternating ring which encloses part of the gamma chain. F(1) is attached to F(0) by a central stalk formed by the gamma and epsilon chains, while a peripheral stalk is formed by the delta and b chains.

It localises to the cell inner membrane. Its function is as follows. F(1)F(0) ATP synthase produces ATP from ADP in the presence of a proton or sodium gradient. F-type ATPases consist of two structural domains, F(1) containing the extramembraneous catalytic core and F(0) containing the membrane proton channel, linked together by a central stalk and a peripheral stalk. During catalysis, ATP synthesis in the catalytic domain of F(1) is coupled via a rotary mechanism of the central stalk subunits to proton translocation. Functionally, component of the F(0) channel, it forms part of the peripheral stalk, linking F(1) to F(0). The b'-subunit is a diverged and duplicated form of b found in plants and photosynthetic bacteria. This Methylorubrum extorquens (strain PA1) (Methylobacterium extorquens) protein is ATP synthase subunit b 2 (atpF2).